Reading from the N-terminus, the 502-residue chain is Pyruvate kinase (502 aa).

R54 provides a ligand contact to substrate. Residues N56, S58, D88, and T89 each contribute to the K(+) site. Position 56-59 (56-59 (NFSH)) interacts with ATP. Positions 95 and 184 each coordinate ATP. E252 lines the Mg(2+) pocket. 3 residues coordinate substrate: G275, D276, and T308. D276 serves as a coordination point for Mg(2+).

Belongs to the pyruvate kinase family. As to quaternary structure, homotetramer. The cofactor is Mg(2+). It depends on K(+) as a cofactor.

The enzyme catalyses pyruvate + ATP = phosphoenolpyruvate + ADP + H(+). Its pathway is carbohydrate degradation; glycolysis; pyruvate from D-glyceraldehyde 3-phosphate: step 5/5. Regulated by phosphoenolpyruvate substrate and is allosterically activated by ribose-5-phosphate, AMP and other nucleoside monophosphates but not by fructose-1,6-bisphosphate. The sequence is that of Pyruvate kinase (pyk) from Lactococcus lactis subsp. lactis (strain IL1403) (Streptococcus lactis).